The chain runs to 274 residues: Large ribosomal subunit protein uL2 (274 aa).

A disordered region spans residues 224-256; the sequence is VMNPVDHPHGGGEGKTGEGRHPVDPWGNLTKGY. Residues 229-246 show a composition bias toward basic and acidic residues; the sequence is DHPHGGGEGKTGEGRHPV.

It belongs to the universal ribosomal protein uL2 family. As to quaternary structure, part of the 50S ribosomal subunit. Forms a bridge to the 30S subunit in the 70S ribosome.

One of the primary rRNA binding proteins. Required for association of the 30S and 50S subunits to form the 70S ribosome, for tRNA binding and peptide bond formation. It has been suggested to have peptidyltransferase activity; this is somewhat controversial. Makes several contacts with the 16S rRNA in the 70S ribosome. The protein is Large ribosomal subunit protein uL2 of Polaromonas naphthalenivorans (strain CJ2).